The sequence spans 321 residues: Aspartate carbamoyltransferase catalytic subunit (321 aa).

Arg-70 and Thr-71 together coordinate carbamoyl phosphate. Lys-98 contacts L-aspartate. Arg-120, His-148, and Gln-151 together coordinate carbamoyl phosphate. Residues Arg-181 and Arg-235 each contribute to the L-aspartate site. Carbamoyl phosphate-binding residues include Gly-276 and Pro-277.

The protein belongs to the aspartate/ornithine carbamoyltransferase superfamily. ATCase family. In terms of assembly, heterododecamer (2C3:3R2) of six catalytic PyrB chains organized as two trimers (C3), and six regulatory PyrI chains organized as three dimers (R2).

The catalysed reaction is carbamoyl phosphate + L-aspartate = N-carbamoyl-L-aspartate + phosphate + H(+). Its pathway is pyrimidine metabolism; UMP biosynthesis via de novo pathway; (S)-dihydroorotate from bicarbonate: step 2/3. Functionally, catalyzes the condensation of carbamoyl phosphate and aspartate to form carbamoyl aspartate and inorganic phosphate, the committed step in the de novo pyrimidine nucleotide biosynthesis pathway. This Gluconacetobacter diazotrophicus (strain ATCC 49037 / DSM 5601 / CCUG 37298 / CIP 103539 / LMG 7603 / PAl5) protein is Aspartate carbamoyltransferase catalytic subunit.